A 427-amino-acid chain; its full sequence is Trigger factor (427 aa).

The PPIase FKBP-type domain maps to 163–248; that stretch reads GDTVILDFEG…LHEIKTKEVP (86 aa).

Belongs to the FKBP-type PPIase family. Tig subfamily.

The protein localises to the cytoplasm. It carries out the reaction [protein]-peptidylproline (omega=180) = [protein]-peptidylproline (omega=0). Its function is as follows. Involved in protein export. Acts as a chaperone by maintaining the newly synthesized protein in an open conformation. Functions as a peptidyl-prolyl cis-trans isomerase. This is Trigger factor from Listeria welshimeri serovar 6b (strain ATCC 35897 / DSM 20650 / CCUG 15529 / CIP 8149 / NCTC 11857 / SLCC 5334 / V8).